A 136-amino-acid polypeptide reads, in one-letter code: Large ribosomal subunit protein uL16 (136 aa).

This sequence belongs to the universal ribosomal protein uL16 family. In terms of assembly, part of the 50S ribosomal subunit.

Binds 23S rRNA and is also seen to make contacts with the A and possibly P site tRNAs. This Orientia tsutsugamushi (strain Boryong) (Rickettsia tsutsugamushi) protein is Large ribosomal subunit protein uL16.